An 815-amino-acid polypeptide reads, in one-letter code: Probable oligoxyloglucan-reducing end-specific xyloglucanase (815 aa).

The signal sequence occupies residues 1-19 (MKFWLQQLGLAVLCASSAA). Asp-58 serves as the catalytic Nucleophile. Asn-113 carries N-linked (GlcNAc...) asparagine glycosylation. The BNR 1 repeat unit spans residues 118–128 (FVSNDRGATFT). An N-linked (GlcNAc...) asparagine glycan is attached at Asn-180. The stretch at 218–228 (YYTTDGGKNWE) is one BNR 2 repeat. N-linked (GlcNAc...) asparagine glycans are attached at residues Asn-246, Asn-290, and Asn-304. A BNR 3 repeat occupies 351–361 (YLSRDGGKTWK). A glycan (N-linked (GlcNAc...) asparagine) is linked at Asn-387. The Proton donor role is filled by Asp-489. One copy of the BNR 4 repeat lies at 545–555 (YSTDGGSEWTK). Residues Asn-564 and Asn-603 are each glycosylated (N-linked (GlcNAc...) asparagine). The stretch at 649-658 (YVSTDGGLSY) is one BNR 5 repeat. Asn-662 carries N-linked (GlcNAc...) asparagine glycosylation. 2 BNR repeats span residues 696–706 (YHTTDFGKRWK) and 749–759 (YRSDDNGSTWD). An N-linked (GlcNAc...) asparagine glycan is attached at Asn-754.

This sequence belongs to the glycosyl hydrolase 74 family.

The protein resides in the secreted. It catalyses the reaction Hydrolysis of cellobiose from the reducing end of xyloglucans consisting of a beta-(1-&gt;4)-linked glucan carrying alpha-D-xylosyl groups on O-6 of the glucose residues. To be a substrate, the first residue must be unsubstituted, the second residue may bear a xylosyl group, whether further glycosylated or not, and the third residue, which becomes the new terminus by the action of the enzyme, is preferably xylosylated, but this xylose residue must not be further substituted.. Functionally, oligoxyloglucan-reducing end-specific xyloglucanase involved in degradation of xyloglucans. Releases the first two glycosyl segments from oligoxyloglucans. Active against cotton xyloglucan, tamarind xyloglucan and tamarind xyloglucan oligomers. The sequence is that of Probable oligoxyloglucan-reducing end-specific xyloglucanase (xgcA) from Neosartorya fischeri (strain ATCC 1020 / DSM 3700 / CBS 544.65 / FGSC A1164 / JCM 1740 / NRRL 181 / WB 181) (Aspergillus fischerianus).